The sequence spans 317 residues: R-spondin-3 (317 aa).

Residues M1 to C20 form the signal peptide. 3 FU repeats span residues S34–G86, R92–P135, and K139–P183. Cystine bridges form between C41–C48, C45–C54, C57–C76, C80–C95, C98–C105, C102–C111, C114–C125, C129–C189, C195–C237, C206–C213, and C246–C253. An N-linked (GlcNAc...) asparagine glycan is attached at N184. The region spanning H194–K254 is the TSP type-1 domain. Basic residues predominate over residues K251–F268. Residues K251–V317 are disordered. The segment covering V274 to E303 has biased composition (basic and acidic residues). A glycan (N-linked (GlcNAc...) asparagine) is linked at N300.

It belongs to the R-spondin family. In terms of assembly, binds heparin.

It localises to the secreted. In terms of biological role, activator of the canonical Wnt signaling pathway by acting as a ligand for lgr4-6 receptors, which acts as a key regulator of angiogenesis. Upon binding to lgr4-6 (lgr4, lgr5 or lgr6), lgr4-6 associate with phosphorylated lrp6 and frizzled receptors that are activated by extracellular Wnt receptors, triggering the canonical Wnt signaling pathway to increase expression of target genes. Acts both in the canonical. Wnt/beta-catenin-dependent pathway and in non-canonical Wnt signaling pathway. Acts as a key regulator of angiogenesis by controlling vascular stability and pruning: acts by activating the non-canonical Wnt signaling pathway in endothelial cells. Can also amplify Wnt signaling pathway independently of LGR4-6 receptors, possibly by acting as a direct antagonistic ligand to RNF43 and ZNRF3. The chain is R-spondin-3 (rspo3) from Danio rerio (Zebrafish).